The sequence spans 64 residues: Large ribosomal subunit protein uL30 (64 aa).

It belongs to the universal ribosomal protein uL30 family. Part of the 50S ribosomal subunit.

The protein is Large ribosomal subunit protein uL30 of Bradyrhizobium diazoefficiens (strain JCM 10833 / BCRC 13528 / IAM 13628 / NBRC 14792 / USDA 110).